The chain runs to 351 residues: Methylthioribose-1-phosphate isomerase (351 aa).

Residues 53–55 (RGA), Arg-96, and Gln-205 each bind substrate. The active-site Proton donor is the Asp-246. 256–257 (NK) contacts substrate.

It belongs to the eIF-2B alpha/beta/delta subunits family. MtnA subfamily.

It carries out the reaction 5-(methylsulfanyl)-alpha-D-ribose 1-phosphate = 5-(methylsulfanyl)-D-ribulose 1-phosphate. It functions in the pathway amino-acid biosynthesis; L-methionine biosynthesis via salvage pathway; L-methionine from S-methyl-5-thio-alpha-D-ribose 1-phosphate: step 1/6. Catalyzes the interconversion of methylthioribose-1-phosphate (MTR-1-P) into methylthioribulose-1-phosphate (MTRu-1-P). In Synechocystis sp. (strain ATCC 27184 / PCC 6803 / Kazusa), this protein is Methylthioribose-1-phosphate isomerase.